A 732-amino-acid chain; its full sequence is S-adenosyl-L-methionine-dependent tRNA 4-demethylwyosine synthase TYW1 (732 aa).

The Flavodoxin-like domain occupies 79–237; it reads VKIFYGSQTG…DFRAWKTKFI (159 aa). FMN is bound by residues 85-89 and 176-208; these read SQTGT and VFGL…HRVM. Positions 248–314 are disordered; sequence RKKSCGGHCK…HQSLNSIVDV (67 aa). Over residues 259–286 the composition is skewed to basic and acidic residues; that stretch reads GKCESHQHGSEEREEGSHEQDELHHRDT. Residues 287 to 301 are compositionally biased toward acidic residues; sequence EEEEPFESSSEEEFG. Residues 400 to 644 form the Radical SAM core domain; the sequence is YGIESHRCME…VDLIPEYEIA (245 aa). [4Fe-4S] cluster is bound by residues C416, C420, and C423.

This sequence belongs to the TYW1 family. It depends on [4Fe-4S] cluster as a cofactor.

It catalyses the reaction N(1)-methylguanosine(37) in tRNA(Phe) + pyruvate + S-adenosyl-L-methionine = 4-demethylwyosine(37) in tRNA(Phe) + 5'-deoxyadenosine + L-methionine + CO2 + H2O. The protein operates within tRNA modification; wybutosine-tRNA(Phe) biosynthesis. Its function is as follows. Probable component of the wybutosine biosynthesis pathway. Wybutosine is a hyper modified guanosine with a tricyclic base found at the 3'-position adjacent to the anticodon of eukaryotic phenylalanine tRNA. Catalyzes the condensation of N-methylguanine with 2 carbon atoms from pyruvate to form the tricyclic 4-demethylwyosine, an intermediate in wybutosine biosynthesis. The protein is S-adenosyl-L-methionine-dependent tRNA 4-demethylwyosine synthase TYW1 (TYW1) of Homo sapiens (Human).